We begin with the raw amino-acid sequence, 343 residues long: tRNA N6-adenosine threonylcarbamoyltransferase (343 aa).

Residues histidine 111 and histidine 115 each coordinate Fe cation. Residues 134–138, aspartate 167, glycine 180, and asparagine 276 each bind substrate; that span reads LVSGG. Aspartate 304 contributes to the Fe cation binding site.

The protein belongs to the KAE1 / TsaD family. Fe(2+) is required as a cofactor.

The protein resides in the cytoplasm. The catalysed reaction is L-threonylcarbamoyladenylate + adenosine(37) in tRNA = N(6)-L-threonylcarbamoyladenosine(37) in tRNA + AMP + H(+). Its function is as follows. Required for the formation of a threonylcarbamoyl group on adenosine at position 37 (t(6)A37) in tRNAs that read codons beginning with adenine. Is involved in the transfer of the threonylcarbamoyl moiety of threonylcarbamoyl-AMP (TC-AMP) to the N6 group of A37, together with TsaE and TsaB. TsaD likely plays a direct catalytic role in this reaction. The chain is tRNA N6-adenosine threonylcarbamoyltransferase from Hahella chejuensis (strain KCTC 2396).